Consider the following 594-residue polypeptide: Chitooligosaccharidolytic beta-N-acetylglucosaminidase (594 aa).

Residues 1–22 (MWSRRIPLFIFGVLVLILSVAA) form the signal peptide. Disulfide bonds link cysteine 31–cysteine 59 and cysteine 36–cysteine 55. Asparagine 164 carries an N-linked (GlcNAc...) asparagine glycan. Catalysis depends on charge relay system residues aspartate 249 and histidine 303. 2 disulfides stabilise this stretch: cysteine 316-cysteine 373 and cysteine 326-cysteine 331. The active-site Charge relay system is the glutamate 368. A glycan (N-linked (GlcNAc...) asparagine) is linked at asparagine 375. 2 disulfide bridges follow: cysteine 478/cysteine 491 and cysteine 585/cysteine 592.

It belongs to the glycosyl hydrolase 20 family. Homodimer.

It carries out the reaction Hydrolysis of terminal non-reducing N-acetyl-D-hexosamine residues in N-acetyl-beta-D-hexosaminides.. Inhibited by O-(2-acetamido-2-deoxy-D-glucopyransylidene)-amino-N-phenylcarbamate (PUGNAc). Inhibited by thiabendazole (TMG)-chitotriomycin. Inhibited by 6-(dimethylamino)-2-(2-(((5-methyl-1,3,4-thiadiazol-2-yl)methyl)amino)ethyl)- 1H-benzo[de]isoquinoline-1,3(2H)-dione (Q2), a synthesized non-carbohydrate unsymmetrical dyad of naphthalimide and thiadiazole having a dimethylamino group at C4 of the naphthalimide. Inhibited poorly by N-acetyl-glucosamine (NAG)-thiazoline (NGT), but when the thiazoline ring of NGT is replaced by a bulky substituent such as in compound 1,2-dideoxy-2'-methylamino-alpha-D-glucopyranoso-[2,1-d]-Delta2'-thiazoline (NMAGT), the inhibition constant Ki is lowered 600-fold compared to that of NGT. Inhibited by berberine, berberine analogs thalifendine and palmatine, and berberine derivative SYSU-1, but not by berberine analog tetrahydroberberine. Functionally, hydrolyzes one beta-GlcNAc unit at a time from the non-reducing ends of substrates, with a preference for shorter substrates. The 2-acetamido group and the beta-glycoside bond linkage in the substrate are required for its activity. Active with p-nitrophenyl (pNP)-beta-GlcNAc, pNP-beta-GalNAc and chitooligosaccharides (degree of polymerization from 2 to 6), but not with the complex N-glycan substrate (GlcNAcbeta-1,2Manalpha-1,6)(GlcNAcbeta-1,2Manalpha-1,3)Manbeta-1,4GlcNAcbeta-1,4GlcNAc-PA (GnGn-PA), pNP-alpha-GlcNAc or with the long polymer colloidal chitin. Involved in chitin catabolism. Involved in the degradation of old cuticle during the pupation stage. This chain is Chitooligosaccharidolytic beta-N-acetylglucosaminidase, found in Ostrinia furnacalis (Asian corn borer).